Here is a 410-residue protein sequence, read N- to C-terminus: Adenosylhomocysteinase (410 aa).

Substrate contacts are provided by aspartate 117 and glutamate 142. 143–145 (TTT) contributes to the NAD(+) binding site. Substrate-binding residues include lysine 172 and aspartate 176. NAD(+) contacts are provided by residues asparagine 177, 206 to 211 (GYGYCG), glutamate 229, 285 to 287 (AGH), and asparagine 332.

This sequence belongs to the adenosylhomocysteinase family. The cofactor is NAD(+).

It is found in the cytoplasm. The catalysed reaction is S-adenosyl-L-homocysteine + H2O = L-homocysteine + adenosine. The protein operates within amino-acid biosynthesis; L-homocysteine biosynthesis; L-homocysteine from S-adenosyl-L-homocysteine: step 1/1. May play a key role in the regulation of the intracellular concentration of adenosylhomocysteine. The protein is Adenosylhomocysteinase of Thermoplasma acidophilum (strain ATCC 25905 / DSM 1728 / JCM 9062 / NBRC 15155 / AMRC-C165).